A 165-amino-acid polypeptide reads, in one-letter code: UPF0303 protein BceJ2315_15790 (165 aa).

This sequence belongs to the UPF0303 family.

The protein is UPF0303 protein BceJ2315_15790 of Burkholderia cenocepacia (strain ATCC BAA-245 / DSM 16553 / LMG 16656 / NCTC 13227 / J2315 / CF5610) (Burkholderia cepacia (strain J2315)).